The chain runs to 379 residues: Putative FBD-associated F-box protein At5g38570 (379 aa).

One can recognise an F-box domain in the interval methionine 1 to valine 47. The 51-residue stretch at cysteine 295–threonine 345 folds into the FBD domain.

The protein is Putative FBD-associated F-box protein At5g38570 of Arabidopsis thaliana (Mouse-ear cress).